The following is a 178-amino-acid chain: MAEQTGAVDQCLLQASSFKSQGNKCYTEHRMRQAVSLYHKALLQLRSLDASLYSPLPGVGPTAVKLNSQQAEELKTLQADCYNNLAACLLQSQPPRYQRVYECSLQVLSLQPENVKALYRAGVSSYHLKDYTNAHHYLSQAASRAPKDGNIKRYVQLTDTALSTFREEEKQRYQGMFG.

3 TPR repeats span residues 15–48 (ASSFKSQGNKCYTEHRMRQAVSLYHKALLQLRSL), 79–114 (ADCYNNLAACLLQSQPPRYQRVYECSLQVLSLQPEN), and 115–148 (VKALYRAGVSSYHLKDYTNAHHYLSQAASRAPKD).

The protein belongs to the TTC9 family.

This Xenopus tropicalis (Western clawed frog) protein is Tetratricopeptide repeat protein 9C (ttc9c).